A 312-amino-acid chain; its full sequence is Glutathione synthetase (312 aa).

Residues Lys-125–Glu-309 form the ATP-grasp domain. Arg-151–Gly-207 provides a ligand contact to ATP. Positions 280 and 282 each coordinate Mg(2+).

Belongs to the prokaryotic GSH synthase family. Mg(2+) is required as a cofactor. Requires Mn(2+) as cofactor.

The enzyme catalyses gamma-L-glutamyl-L-cysteine + glycine + ATP = glutathione + ADP + phosphate + H(+). Its pathway is sulfur metabolism; glutathione biosynthesis; glutathione from L-cysteine and L-glutamate: step 2/2. In Brucella melitensis biotype 1 (strain ATCC 23456 / CCUG 17765 / NCTC 10094 / 16M), this protein is Glutathione synthetase.